A 411-amino-acid chain; its full sequence is Tyrosine--tRNA ligase (411 aa).

An L-tyrosine-binding site is contributed by Y34. The 'HIGH' region motif lies at C39–S48. Positions 171 and 175 each coordinate L-tyrosine. The short motif at K231–T235 is the 'KMSKS' region element. K234 provides a ligand contact to ATP. Positions I345–V411 constitute an S4 RNA-binding domain.

The protein belongs to the class-I aminoacyl-tRNA synthetase family. TyrS type 1 subfamily. Homodimer.

Its subcellular location is the cytoplasm. It carries out the reaction tRNA(Tyr) + L-tyrosine + ATP = L-tyrosyl-tRNA(Tyr) + AMP + diphosphate + H(+). In terms of biological role, catalyzes the attachment of tyrosine to tRNA(Tyr) in a two-step reaction: tyrosine is first activated by ATP to form Tyr-AMP and then transferred to the acceptor end of tRNA(Tyr). The polypeptide is Tyrosine--tRNA ligase (Rickettsia africae (strain ESF-5)).